The primary structure comprises 516 residues: Protein indeterminate-domain 4, chloroplastic (516 aa).

Positions 1-26 (MSSSSYNTSVIPSSSSSAQPFFITSS) are enriched in low complexity. Residues 1 to 68 (MSSSSYNTSV…QPGNPNPDAE (68 aa)) are disordered. A chloroplast-targeting transit peptide spans 1-70 (MSSSSYNTSV…GNPNPDAEVV (70 aa)). Serine 73 is modified (phosphoserine). 2 C2H2-type zinc fingers span residues 83–105 (FICD…RRGH) and 124–154 (YLCP…YRKH). The Nuclear localization signal signature appears at 146–153 (IKKHYYRK). The C2H2-type 2; degenerate zinc finger occupies 159–182 (WKCEKCSKRYAVQSDWKAHSKTCG). Zn(2+)-binding residues include cysteine 161, cysteine 164, histidine 177, cysteine 181, cysteine 188, cysteine 190, histidine 203, and cysteine 207. Residues 186–209 (YRCDCGTIFSRRDSYITHRAFCDA) form a CCHC-type 2; atypical zinc finger. Positions 196–208 (RRDSYITHRAFCD) are SHR-binding. Residues 483–516 (NRGGGGGGRGSARGGVSLDGEAKFPEQNYPFGRG) are disordered. Positions 484–495 (RGGGGGGRGSAR) are enriched in gly residues.

In terms of assembly, binds to RGA and SCL3 competitively in the nucleus.

The protein resides in the plastid. Its subcellular location is the chloroplast. It is found in the nucleus. Transcription factor that may act a transcriptional activator of nuclear-encoded photosynthetic gene expression. Binds DNA via its zinc fingers. Recognizes and binds to SCL3 promoter sequence 5'-AGACAA-3' to promote its expression when in complex with RGA. In Arabidopsis thaliana (Mouse-ear cress), this protein is Protein indeterminate-domain 4, chloroplastic.